The primary structure comprises 131 residues: Small ribosomal subunit protein eS6 (131 aa).

Residues 76–95 (APPGFKPKRKGERRRKTVRG) form a disordered region. Residues 81 to 93 (KPKRKGERRRKTV) show a composition bias toward basic residues.

Belongs to the eukaryotic ribosomal protein eS6 family.

This chain is Small ribosomal subunit protein eS6, found in Methanocaldococcus jannaschii (strain ATCC 43067 / DSM 2661 / JAL-1 / JCM 10045 / NBRC 100440) (Methanococcus jannaschii).